Here is a 554-residue protein sequence, read N- to C-terminus: MTPEELSLAISACLKDAVAAGEIALAESAVPEDVRVERPKNRDHGDWATNIALQLAKQAGTNPREFATILSARLKTISGVSAVDIAGPGFLNITVDAAAAGALAKAIVEAGTQYGTNTALAGHTVNMEFVSANPTGPLHIGHTRWAALGDAIARVLRASGADVTAEYYINDAGSQMNTFANSVYSRLHGLPVPEGGYPGQYIADLGHEVLTAHPDIRELTEVAALPVIRAAAYEAQMKDIKATLADFGVAFDVFFSEQELHDAGAIESAVARLREQGHVFDDGGAVWLRTTDFGDDKDRVMIRANGEPTYFAADAAYYLSKKDRGYTEKIYLLGADHHGYIHRLKAIAAAAGDDPEVNIEVLIGQLVSVNGAKLSKRAGNIIELKDLIDWLGKDAVRYSLARFPADSPLTLDPELLKKNSNENPVFYVQYAHARSRGAARNAVAAGVERQVDGADSFDASLLDHATENELLSYLGSYPSIVAKAAELREPHRVARHLEAIAGAYHRWYDACRIAPMGEEAVTDVNRTRLWLNDATSQVLANGLDLLGVSAPERM.

Positions 132 to 142 match the 'HIGH' region motif; that stretch reads ANPTGPLHIGH.

The protein belongs to the class-I aminoacyl-tRNA synthetase family. Monomer.

The protein localises to the cytoplasm. The enzyme catalyses tRNA(Arg) + L-arginine + ATP = L-arginyl-tRNA(Arg) + AMP + diphosphate. This Pseudarthrobacter chlorophenolicus (strain ATCC 700700 / DSM 12829 / CIP 107037 / JCM 12360 / KCTC 9906 / NCIMB 13794 / A6) (Arthrobacter chlorophenolicus) protein is Arginine--tRNA ligase.